A 433-amino-acid polypeptide reads, in one-letter code: Histone deacetylase RPD3 (433 aa).

Residues 19–331 (RRVAYFYDAD…WCFETGLLNN (313 aa)) form a histone deacetylase region. The active site involves His151. The short motif at 320–340 (RTWCFETGLLNNVVLDKDLPY) is the ESA1-RPD3 motif element. The interval 388–433 (SVQLNHTPRDAEDLGDVEEDSAEAKDTKGGSQYARDLHVEHDNEFY) is disordered. Thr394 carries the phosphothreonine modification. At Ser408 the chain carries Phosphoserine. The span at 422-433 (RDLHVEHDNEFY) shows a compositional bias: basic and acidic residues.

The protein belongs to the histone deacetylase family. HD type 1 subfamily. As to quaternary structure, component of the RPD3C(L) complex composed of at least ASH1, CTI6, DEP1, PHO23, RPD3, RXT2, RXT3, SAP30, SDS3, SIN3, UME1 and UME6. Component of the RPD3C(S) complex composed of at least EAF3, RCO1, RPD3, SIN3, and UME1. Interacts with cyclophilins CPR1, CPR6 and CPR7, with the kinase HOG1, and with ESS1, CYC8 and HAC1.

It is found in the cytoplasm. It localises to the nucleus. It catalyses the reaction N(6)-acetyl-L-lysyl-[histone] + H2O = L-lysyl-[histone] + acetate. Functionally, catalytic component of the RPD3 histone deacetylase (HDAC) complexes RPD3C(L) and RPD3C(S) responsible for the deacetylation of lysine residues on the N-terminal part of the core histones (H2A, H2B, H3 and H4). Histone deacetylation plays an important role in transcriptional regulation, cell cycle progression, DNA damage response, osmotic stress response and developmental events. Is involved in rDNA and telomere silencing and in double strand breaks repair. Required for both full transcription repression and activation of many genes including cell type-specific genes (STE6, TY2 and HO), cell differentiation-specific genes (SPO13), genes that respond to external signals (PHO5) and TRK2. The RPD3 complexes regulate also chromosomal replication timing. The protein is Histone deacetylase RPD3 (RPD3) of Saccharomyces cerevisiae (strain ATCC 204508 / S288c) (Baker's yeast).